The sequence spans 384 residues: GDP/UDP-N,N'-diacetylbacillosamine 2-epimerase (hydrolyzing) (384 aa).

This sequence belongs to the UDP-N-acetylglucosamine 2-epimerase family.

The catalysed reaction is GDP-N,N'-diacetylbacillosamine + H2O = 2,4-diacetamido-2,4,6-trideoxy-alpha-D-mannopyranose + GDP + H(+). The enzyme catalyses UDP-N,N'-diacetylbacillosamine + H2O = 2,4-diacetamido-2,4,6-trideoxy-alpha-D-mannopyranose + UDP + H(+). In terms of biological role, involved in biosynthesis of legionaminic acid (5,7-diamino-3,5,7,9-tetradeoxy-D-glycero-D-galacto-non-2-ulosonic acid)(Leg), a sialic acid-like derivative that is incorporated into flagellin via O-linkage to Ser/Thr. Catalyzes the conversion of GDP-N,N'-diacetylbacillosamine (Bac2Ac4Ac) into 2,4-diacetamido-2,4,6-trideoxymannose and GDP. It can also use UDP-N,N'-diacetylbacillosamine however it generates small quantities of 2,4-diacetamido-2,4,6-trideoxymannose. This is GDP/UDP-N,N'-diacetylbacillosamine 2-epimerase (hydrolyzing) (legG) from Campylobacter jejuni subsp. jejuni serotype O:2 (strain ATCC 700819 / NCTC 11168).